The sequence spans 212 residues: Floral homeotic protein PMADS 2 (212 aa).

In terms of domain architecture, MADS-box spans arginine 3–cysteine 58. The K-box domain occupies histidine 84–alanine 170.

As to expression, predominantly expressed in petals and stamens, less in carpels and sepals.

The protein resides in the nucleus. Its function is as follows. Transcription factor involved in the genetic control of flower development. The protein is Floral homeotic protein PMADS 2 (PMADS2) of Petunia hybrida (Petunia).